The following is a 107-amino-acid chain: UPF0145 protein ECA2666 (107 aa).

It belongs to the UPF0145 family.

The chain is UPF0145 protein ECA2666 from Pectobacterium atrosepticum (strain SCRI 1043 / ATCC BAA-672) (Erwinia carotovora subsp. atroseptica).